Reading from the N-terminus, the 62-residue chain is UPF0339 protein Atu0232 (62 aa).

Belongs to the UPF0339 family.

The chain is UPF0339 protein Atu0232 from Agrobacterium fabrum (strain C58 / ATCC 33970) (Agrobacterium tumefaciens (strain C58)).